A 122-amino-acid chain; its full sequence is Large ribosomal subunit protein uL14 (122 aa).

Belongs to the universal ribosomal protein uL14 family. As to quaternary structure, part of the 50S ribosomal subunit. Forms a cluster with proteins L3 and L19. In the 70S ribosome, L14 and L19 interact and together make contacts with the 16S rRNA in bridges B5 and B8.

In terms of biological role, binds to 23S rRNA. Forms part of two intersubunit bridges in the 70S ribosome. The polypeptide is Large ribosomal subunit protein uL14 (Staphylococcus aureus (strain MW2)).